The primary structure comprises 153 residues: Ribosomal RNA large subunit methyltransferase H (153 aa).

S-adenosyl-L-methionine is bound by residues Leu-70, Gly-102, and Leu-121–Phe-126.

Belongs to the RNA methyltransferase RlmH family. Homodimer.

The protein localises to the cytoplasm. The catalysed reaction is pseudouridine(1915) in 23S rRNA + S-adenosyl-L-methionine = N(3)-methylpseudouridine(1915) in 23S rRNA + S-adenosyl-L-homocysteine + H(+). Specifically methylates the pseudouridine at position 1915 (m3Psi1915) in 23S rRNA. The protein is Ribosomal RNA large subunit methyltransferase H of Trichlorobacter lovleyi (strain ATCC BAA-1151 / DSM 17278 / SZ) (Geobacter lovleyi).